The primary structure comprises 20 residues: Cytochrome P450IIB (20 aa).

The protein belongs to the cytochrome P450 family. Heme serves as cofactor.

Its subcellular location is the endoplasmic reticulum membrane. The protein resides in the microsome membrane. The catalysed reaction is an organic molecule + reduced [NADPH--hemoprotein reductase] + O2 = an alcohol + oxidized [NADPH--hemoprotein reductase] + H2O + H(+). Cytochromes P450 are a group of heme-thiolate monooxygenases. In liver microsomes, this enzyme is involved in an NADPH-dependent electron transport pathway. This isozyme is active upon P.nitroanisole, aniline, D-benzphetamine, delta(9)-tetrahydrocannabinol (THC) and strychnine. The polypeptide is Cytochrome P450IIB (Cavia porcellus (Guinea pig)).